Consider the following 158-residue polypeptide: Crossover junction endodeoxyribonuclease RuvC (158 aa).

Residues aspartate 7, glutamate 66, and aspartate 139 contribute to the active site. The Mg(2+) site is built by aspartate 7, glutamate 66, and aspartate 139.

This sequence belongs to the RuvC family. As to quaternary structure, homodimer which binds Holliday junction (HJ) DNA. The HJ becomes 2-fold symmetrical on binding to RuvC with unstacked arms; it has a different conformation from HJ DNA in complex with RuvA. In the full resolvosome a probable DNA-RuvA(4)-RuvB(12)-RuvC(2) complex forms which resolves the HJ. Requires Mg(2+) as cofactor.

It localises to the cytoplasm. The catalysed reaction is Endonucleolytic cleavage at a junction such as a reciprocal single-stranded crossover between two homologous DNA duplexes (Holliday junction).. Its function is as follows. The RuvA-RuvB-RuvC complex processes Holliday junction (HJ) DNA during genetic recombination and DNA repair. Endonuclease that resolves HJ intermediates. Cleaves cruciform DNA by making single-stranded nicks across the HJ at symmetrical positions within the homologous arms, yielding a 5'-phosphate and a 3'-hydroxyl group; requires a central core of homology in the junction. The consensus cleavage sequence is 5'-(A/T)TT(C/G)-3'. Cleavage occurs on the 3'-side of the TT dinucleotide at the point of strand exchange. HJ branch migration catalyzed by RuvA-RuvB allows RuvC to scan DNA until it finds its consensus sequence, where it cleaves and resolves the cruciform DNA. The polypeptide is Crossover junction endodeoxyribonuclease RuvC (Campylobacter lari (strain RM2100 / D67 / ATCC BAA-1060)).